A 146-amino-acid chain; its full sequence is Large ribosomal subunit protein uL11 (146 aa).

The protein belongs to the universal ribosomal protein uL11 family. As to quaternary structure, part of the ribosomal stalk of the 50S ribosomal subunit. Interacts with L10 and the large rRNA to form the base of the stalk. L10 forms an elongated spine to which L12 dimers bind in a sequential fashion forming a multimeric L10(L12)X complex. Post-translationally, one or more lysine residues are methylated.

Functionally, forms part of the ribosomal stalk which helps the ribosome interact with GTP-bound translation factors. The chain is Large ribosomal subunit protein uL11 from Corynebacterium jeikeium (strain K411).